Consider the following 562-residue polypeptide: RNA N(6)-adenosine-methyltransferase METTL16 (562 aa).

Residues 17–20 (PPDF) are RNA-binding. S-adenosyl-L-methionine-binding residues include arginine 82, glycine 110, serine 114, glutamate 133, threonine 164, and asparagine 184. The tract at residues 163 to 167 (KTLLM) is K-loop. RNA-binding regions lie at residues 199-211 (SRNPRRPPPSSVN), 250-254 (GKKCS), and 277-283 (QGRTMRW). Residues 289 to 400 (FYDDVTVPSP…QLREVPRAPE (112 aa)) are VCR 1. Serine 329 is subject to Phosphoserine. Over residues 402 to 413 (VIQALEEKKPTP) the composition is skewed to basic and acidic residues. Residues 402 to 498 (VIQALEEKKP…DQEASEQFGS (97 aa)) form a disordered region. Acidic residues predominate over residues 458-467 (ENPEPTEDER). Threonine 463 bears the Phosphothreonine mark. Residues 480–496 (CQGSSNGAQDQEASEQF) are compositionally biased toward polar residues. Residues 514 to 562 (YLFKCLINVKKEVDDALVEMHWVEGQNRDLMNQLCTYIRNQIFRLVAVN) form a VCR 2 region.

This sequence belongs to the methyltransferase superfamily. METTL16/RlmF family. In terms of assembly, interacts with MEPCE. Interacts with LARP7.

The protein resides in the nucleus. The protein localises to the cytoplasm. The enzyme catalyses adenosine in U6 snRNA + S-adenosyl-L-methionine = N(6)-methyladenosine in U6 snRNA + S-adenosyl-L-homocysteine + H(+). The catalysed reaction is an adenosine in mRNA + S-adenosyl-L-methionine = an N(6)-methyladenosine in mRNA + S-adenosyl-L-homocysteine + H(+). Methyltransferase activity is autoinhibited by the K-loop region that blocks S-adenosyl-L-methionine-binding. Upon activation, K-loop changes conformation, allowing S-adenosyl-L-methionine-binding and subsequent methyltransferase activity. mRNA N6-adenosine-methyltransferase activity is inhibited by zinc. RNA N6-methyltransferase that methylates adenosine residues at the N(6) position of a subset of RNAs and is involved in S-adenosyl-L-methionine homeostasis by regulating expression of MAT2A transcripts. Able to N6-methylate a subset of mRNAs and U6 small nuclear RNAs (U6 snRNAs). In contrast to the METTL3-METTL14 heterodimer, only able to methylate a limited number of RNAs: requires both a 5'UACAGAGAA-3' nonamer sequence and a specific RNA structure. Plays a key role in S-adenosyl-L-methionine homeostasis by mediating N6-methylation of MAT2A mRNAs, altering splicing of MAT2A transcripts: in presence of S-adenosyl-L-methionine, binds the 3'-UTR region of MAT2A mRNA and specifically N6-methylates the first hairpin of MAT2A mRNA, preventing recognition of their 3'-splice site by U2AF1/U2AF35, thereby inhibiting splicing and protein production of S-adenosylmethionine synthase. In S-adenosyl-L-methionine-limiting conditions, binds the 3'-UTR region of MAT2A mRNA but stalls due to the lack of a methyl donor, preventing N6-methylation and promoting expression of MAT2A. In addition to mRNAs, also able to mediate N6-methylation of U6 small nuclear RNA (U6 snRNA): specifically N6-methylates adenine in position 43 of U6 snRNAs. Also able to bind various lncRNAs, such as 7SK snRNA (7SK RNA) or 7SL RNA. Specifically binds the 3'-end of the MALAT1 long non-coding RNA. The chain is RNA N(6)-adenosine-methyltransferase METTL16 from Homo sapiens (Human).